A 199-amino-acid chain; its full sequence is Recombination protein RecR (199 aa).

The segment at 58-73 (CKKCFNLTSEEECEIC) adopts a C4-type zinc-finger fold. Positions 81–175 (KIICVVAETK…KVTRIAYGLP (95 aa)) constitute a Toprim domain.

This sequence belongs to the RecR family.

Its function is as follows. May play a role in DNA repair. It seems to be involved in an RecBC-independent recombinational process of DNA repair. It may act with RecF and RecO. The protein is Recombination protein RecR of Prochlorococcus marinus subsp. pastoris (strain CCMP1986 / NIES-2087 / MED4).